A 188-amino-acid chain; its full sequence is Probable thiol:disulfide interchange protein DsbE-2 (188 aa).

Residues 1-11 lie on the Cytoplasmic side of the membrane; it reads MSMLHQQKRKN. A helical transmembrane segment spans residues 12 to 32; the sequence is HFVFLPLVILLAVCALLFIGL. Residues 33–188 are Periplasmic-facing; it reads QQDPQKIASA…KLEAENAKVR (156 aa). In terms of domain architecture, Thioredoxin spans 42–179; that stretch reads ALIGKPVPTF…QEMFIPEWQK (138 aa). Cysteines 82 and 85 form a disulfide.

Belongs to the thioredoxin family. DsbE subfamily.

Its subcellular location is the cell inner membrane. Its function is as follows. Could be involved in disulfide bond formation. Could catalyzes a late, reductive step in the assembly of periplasmic NrfA c-type cytochrome, probably the reduction of disulfide bonds of the apocytochrome c to allow covalent linkage with the heme. Possible subunit of a heme lyase. This is Probable thiol:disulfide interchange protein DsbE-2 (nrfX) from Pasteurella multocida (strain Pm70).